A 348-amino-acid polypeptide reads, in one-letter code: Rhodopsin (348 aa).

Over 1–33 (TEGPYFYVPMVNTTGIVRSPYEYPQYYLVNPAA) the chain is Extracellular. A glycan (N-linked (GlcNAc...) asparagine) is linked at N12. A helical membrane pass occupies residues 34-58 (YAVLGAYMFFLIILGFPINFLTLYV). The Cytoplasmic portion of the chain corresponds to 59-70 (TLEHKKLRTPLN). Residues 71-93 (YILLNLAVADLFMVIGGFTTTMY) traverse the membrane as a helical segment. Residues 94-107 (SSMHGYFVLGRLGC) lie on the Extracellular side of the membrane. Residues C107 and C184 are joined by a disulfide bond. The chain crosses the membrane as a helical span at residues 108 to 130 (NLEGFSATLGGMISLWSLAVLAI). The short motif at 131–133 (ERW) is the 'Ionic lock' involved in activated form stabilization element. The Cytoplasmic portion of the chain corresponds to 131 to 149 (ERWVVVCKPISNFRFGENH). Residues 150-170 (AIMGVSLTWTMALACTVPPLV) traverse the membrane as a helical segment. The Extracellular portion of the chain corresponds to 171–199 (GWSRYIPEGMQCSCGIDYYTRAEGFNNES). A glycan (N-linked (GlcNAc...) asparagine) is linked at N197. Residues 200-221 (FVLYMFFCHFMVPLIIIFFCYG) traverse the membrane as a helical segment. Residues 222–249 (RLLCAVKEAAAAQQESETTQRAEREVTR) lie on the Cytoplasmic side of the membrane. Residues 250 to 271 (MVILMVIGYLVCWLPYASVAWF) traverse the membrane as a helical segment. Residues 272–283 (IFTHQGSEFGPL) lie on the Extracellular side of the membrane. A helical membrane pass occupies residues 284–305 (FMTIPAFFAKSSSIYNPVIYIC). Position 293 is an N6-(retinylidene)lysine (K293). Residues 306–348 (MNKQFRNCMITTLFCGKNPFEGEEEGASSTKTEASSASSVSPA) are Cytoplasmic-facing. The S-palmitoyl cysteine moiety is linked to residue C320. Residues 327-348 (GEEEGASSTKTEASSASSVSPA) form a disordered region. Residues 332 to 348 (ASSTKTEASSASSVSPA) are compositionally biased toward low complexity.

It belongs to the G-protein coupled receptor 1 family. Opsin subfamily. Post-translationally, phosphorylated on some or all of the serine and threonine residues present in the C-terminal region. Contains one covalently linked retinal chromophore.

The protein resides in the membrane. Its subcellular location is the cell projection. It localises to the cilium. The protein localises to the photoreceptor outer segment. Photoreceptor required for image-forming vision at low light intensity. While most salt water fish species use retinal as chromophore, most freshwater fish use 3-dehydroretinal, or a mixture of retinal and 3-dehydroretinal. Light-induced isomerization of 11-cis to all-trans retinal triggers a conformational change that activates signaling via G-proteins. Subsequent receptor phosphorylation mediates displacement of the bound G-protein alpha subunit by arrestin and terminates signaling. This is Rhodopsin (rho) from Neoniphon argenteus (Clearfin squirrelfish).